The following is a 990-amino-acid chain: Presequence protease, mitochondrial (990 aa).

Residues 1–56 constitute a mitochondrion transit peptide; the sequence is MLRFQRTVPRVAIRRLANVYSEGAVLHGYKVRRAQEIPEMRMAAVELEHEMTGARH. Zn(2+) is bound at residue His84. The Proton acceptor role is filled by Glu87. Residue His88 coordinates Zn(2+). Glu160 is an active-site residue. Glu185 contributes to the Zn(2+) binding site.

Belongs to the peptidase M16 family. PreP subfamily. As to quaternary structure, monomer and homodimer; homodimerization is induced by binding of the substrate. Zn(2+) serves as cofactor.

Its subcellular location is the mitochondrion intermembrane space. It localises to the mitochondrion matrix. Degrades mitochondrial transit peptides after their cleavage in the intermembrane space or in the matrix, and presequence peptides; clearance of these peptides is required to keep the presequence processing machinery running. Preferentially cleaves the N-terminal side of paired basic amino acid residues. Also degrades other unstructured peptides. May function as an ATP-dependent peptidase as opposed to a metalloendopeptidase. This Eremothecium gossypii (strain ATCC 10895 / CBS 109.51 / FGSC 9923 / NRRL Y-1056) (Yeast) protein is Presequence protease, mitochondrial (CYM1).